Here is a 1576-residue protein sequence, read N- to C-terminus: Proton channel OtopLc (1576 aa).

Disordered regions lie at residues 1-602 and 621-736; these read MDSS…SSPP and QIGS…SSPV. 2 stretches are compositionally biased toward low complexity: residues 58–67 and 76–85; these read SLAEEVLLLV and LLGQPLPTLT. Composition is skewed to acidic residues over residues 103-116, 159-171, 186-198, and 206-216; these read DEGD…EPVP, DDGE…DAEE, SNPD…EEQE, and PKEEDEEEDDD. Pro residues predominate over residues 219-228; it reads TPPPPLPPLP. The segment covering 229-241 has biased composition (polar residues); it reads SNFSYVQGHNLGQ. The N-linked (GlcNAc...) asparagine glycan is linked to N230. Residues 243 to 252 show a composition bias toward low complexity; it reads TPPLTKSPSN. Over residues 253-264 the composition is skewed to pro residues; that stretch reads SPSPPVTPPPCP. N-linked (GlcNAc...) asparagine glycosylation is present at N267. A compositionally biased stretch (acidic residues) spans 316–341; that stretch reads DQPEPEDQPPEPENEPEPEPEPEPEP. A compositionally biased stretch (basic and acidic residues) spans 347-356; the sequence is AREDYSRSLD. Residues 362 to 376 are compositionally biased toward polar residues; it reads TTITTPPSNGYSASS. A compositionally biased stretch (basic and acidic residues) spans 384–393; it reads HFAELDEDRG. Positions 402–419 are enriched in acidic residues; that stretch reads QEPEEEVEEEEEEEEEEL. Residues 420 to 433 are compositionally biased toward basic and acidic residues; it reads TKETDEISVDRESL. Residues 434-457 show a composition bias toward polar residues; that stretch reads QDQGGDSISSPRPASILTGSISTS. The segment covering 465–507 has biased composition (low complexity); it reads SPKPESRGPSRSGSQRSQLRSGSQQGSIAESRGGSRIGSRTGS. 2 stretches are compositionally biased toward polar residues: residues 519–534 and 545–555; these read PQAS…SQGQ and KSGSQRMQSPQ. The segment covering 563-575 has biased composition (pro residues); that stretch reads MPSPPLMRSPPPE. Residues 661–685 are compositionally biased toward low complexity; it reads AAAAPAVTTTAATTAVTSQPRSHFT. Residues 686 to 709 show a composition bias toward basic residues; that stretch reads SSHHHYHLPHQFQHPHHQNHHTHS. A helical membrane pass occupies residues 741–761; sequence LFMAGVAPPIAAGAGSLMAMP. The disordered stretch occupies residues 771-845; sequence GRVSARSGSQ…GSSSQPALSG (75 aa). The span at 776 to 799 shows a compositional bias: polar residues; that stretch reads RSGSQHHVTIDESSLPSHKGNIQE. The segment covering 826–839 has biased composition (low complexity); the sequence is DSSDPPSSPGGSSS. 2 helical membrane passes run 891–911 and 931–951; these read ALAT…GIAF and LYLY…LIWG. The span at 962-973 shows a compositional bias: polar residues; it reads PSKSATKASGTD. Residues 962 to 1001 are disordered; the sequence is PSKSATKASGTDSMDESDTDSNSVHHRLPPPIPVRRPSLL. The next 3 helical transmembrane spans lie at 1019–1039, 1051–1071, and 1084–1104; these read GAVA…GQYF, LLAL…YFIF, and IIAR…WLNV. N1121 carries N-linked (GlcNAc...) asparagine glycosylation. 7 helical membrane passes run 1179–1199, 1239–1259, 1272–1292, 1310–1330, 1340–1360, 1381–1401, and 1412–1432; these read FLFP…YVMW, FVGI…FVLI, VTIC…VGMI, ILLV…VIAG, LVPI…MFIL, IVTF…LEKS, and FYGL…AIFY. A glycan (N-linked (GlcNAc...) asparagine) is linked at N1479. Positions 1498-1549 are disordered; the sequence is EEVDSGESNSAEDAGAGAGSGGSRGSGGGAGAAEAGEAGEEGQQGGDSSCGL. A compositionally biased stretch (low complexity) spans 1503-1512; the sequence is GESNSAEDAG. Residues 1513–1528 are compositionally biased toward gly residues; it reads AGAGSGGSRGSGGGAG.

Belongs to the otopetrin family.

It is found in the cell membrane. Functionally, proton-selective channel that specifically transports protons into cells. Proton-selective channel activity is probably required in cell types that use changes in intracellular pH for cell signaling or to regulate biochemical or developmental processes. The chain is Proton channel OtopLc from Drosophila melanogaster (Fruit fly).